The following is a 195-amino-acid chain: Putative kinase protein 143R (195 aa).

8–16 is a binding site for ATP; the sequence is GIIGAGKST. Substrate is bound by residues E31, Y43, and Q54. Catalysis depends on E78, which acts as the Proton acceptor. Residues R79 and E142 each contribute to the substrate site.

Belongs to the DCK/DGK family.

The protein is Putative kinase protein 143R of Acheta domesticus (House cricket).